The sequence spans 347 residues: NADH-ubiquinone oxidoreductase chain 2 (347 aa).

11 helical membrane passes run 3–23 (PVVL…VMTT), 25–45 (HWLL…PILM), 59–79 (YFLT…INLI), 96–116 (IIMT…FWVP), 122–142 (IQLS…MSIL), 149–169 (INLH…GWGG), 178–198 (IMAY…IYNP), 200–220 (MALL…MTFM), 237–257 (MPLL…LPPL), 274–294 (NSII…FFYM), and 325–345 (LLSP…MLAL).

This sequence belongs to the complex I subunit 2 family. As to quaternary structure, core subunit of respiratory chain NADH dehydrogenase (Complex I) which is composed of 45 different subunits. Interacts with TMEM242.

Its subcellular location is the mitochondrion inner membrane. The catalysed reaction is a ubiquinone + NADH + 5 H(+)(in) = a ubiquinol + NAD(+) + 4 H(+)(out). Core subunit of the mitochondrial membrane respiratory chain NADH dehydrogenase (Complex I) which catalyzes electron transfer from NADH through the respiratory chain, using ubiquinone as an electron acceptor. Essential for the catalytic activity and assembly of complex I. The sequence is that of NADH-ubiquinone oxidoreductase chain 2 from Paranyctimene raptor (Unstriped tube-nosed fruit bat).